A 156-amino-acid polypeptide reads, in one-letter code: Large ribosomal subunit protein uL15 (156 aa).

Residues 1 to 44 (MKLNELRDNPGASPKRTRVGRGPGSGKGKMGGRGIKGQKSRSGV) form a disordered region. Residues 21-35 (RGPGSGKGKMGGRGI) show a composition bias toward gly residues.

It belongs to the universal ribosomal protein uL15 family. In terms of assembly, part of the 50S ribosomal subunit.

Its function is as follows. Binds to the 23S rRNA. This is Large ribosomal subunit protein uL15 from Ruegeria sp. (strain TM1040) (Silicibacter sp.).